The chain runs to 194 residues: Flagellin A2 (194 aa).

Positions 1 to 12 (MFEFITDEDERG) are excised as a propeptide.

This sequence belongs to the archaeal flagellin family. Post-translationally, glycosylated.

The protein localises to the archaeal flagellum. Flagellin is the subunit protein which polymerizes to form the filaments of archaeal flagella. In Halobacterium salinarum (strain ATCC 700922 / JCM 11081 / NRC-1) (Halobacterium halobium), this protein is Flagellin A2 (flaA2).